A 693-amino-acid polypeptide reads, in one-letter code: MIRYIILLVYFLIFEVNSQLDCSKAPTPAIRIMCNQIQRWDQKARATPSLSGDVKTPGIAGKAMAAEFSPIASNVFQCMDIACLCVFFRGTGGNNCVVQGRPLGKVVRKEYRMLSDDERQRLHQAFRTLKQNGEYDRLARVHAQYSESGAAHSGPAFLPWHREFVKRMEFLIRQVDPSLHLPYWDSSLDQNLPDSKDSILWTNEFMGDANGEVNNGPFRSWKTVENKPAITRAVGAQGKGYSEDEINTMLGQTDIAQVLAFSAPQRGCPYQPNFNVPEYTHGNPHIYVGGDMLETSTAANDPIFWMHHSFVDLLWEMYRQSKQTRATRETAYPADNRQCSSEHHFRAAFMRPFTPMRNADGLSNMYTDNLYSYAPRPSCNAGPTCGSPYLFCDKSHGAPRCAVRMKPEGNCASFKNGEDACYQGSCQSGKCVAGSQNVTPPPTIQPTKPVVTVEVFSETCLKIRLKFFQTSCFNENECCGPWSAKGECQKNPVYMNVWCKASCRQCTPNYNINEECSDRHTNCAMWSRSGECNKNPLWMSENCRSSCQKCGRSRAATCGGGGGADSISNPTTMPPATNNGQQNTPCDSPMCYNEDQCCPIWAQRGQCRSNPGYMTCQCKVSCGVCRPNYVYGPCADYHYDCAAWARRGECLKNKWMPENCRRSCNTCVNQQQLAARCATRIVRSAFLELIRMK.

The signal sequence occupies residues 1-18 (MIRYIILLVYFLIFEVNS). 6 residues coordinate Cu cation: histidine 142, histidine 152, histidine 161, histidine 281, histidine 285, and histidine 308. 4 ShKT domains span residues 472–506 (CFNENECCGPWSAKGECQKNPVYMNVWCKASCRQC), 516–550 (CSDRHTNCAMWSRSGECNKNPLWMSENCRSSCQKC), 591–625 (CYNEDQCCPIWAQRGQCRSNPGYMTCQCKVSCGVC), and 634–667 (CADYHYDCAAWARRGECLKNKWMPENCRRSCNTC). Disulfide bonds link cysteine 472/cysteine 506, cysteine 479/cysteine 499, cysteine 488/cysteine 503, cysteine 516/cysteine 550, cysteine 523/cysteine 543, cysteine 532/cysteine 547, cysteine 591/cysteine 625, cysteine 598/cysteine 618, cysteine 607/cysteine 622, cysteine 634/cysteine 667, cysteine 641/cysteine 660, and cysteine 650/cysteine 664.

The protein belongs to the tyrosinase family. Cu(2+) is required as a cofactor.

The chain is Putative tyrosinase-like protein tyr-3 (tyr-3) from Caenorhabditis elegans.